The following is a 316-amino-acid chain: Pantothenate kinase (316 aa).

95–102 (GSVAVGKS) contributes to the ATP binding site.

The protein belongs to the prokaryotic pantothenate kinase family.

It is found in the cytoplasm. The enzyme catalyses (R)-pantothenate + ATP = (R)-4'-phosphopantothenate + ADP + H(+). It functions in the pathway cofactor biosynthesis; coenzyme A biosynthesis; CoA from (R)-pantothenate: step 1/5. The sequence is that of Pantothenate kinase from Klebsiella pneumoniae subsp. pneumoniae (strain ATCC 700721 / MGH 78578).